We begin with the raw amino-acid sequence, 210 residues long: CASP-like protein 3A2 (210 aa).

The Cytoplasmic portion of the chain corresponds to 1-45 (MMMNGQKMAAAEVAVQLPESKMVTENIGGAAAAMRPFGRKAEVMN). A helical membrane pass occupies residues 46–66 (VLLRVLCMVTSVAALSSMVTA). At 67–92 (QQSSTVSIYGFMLPIQSKWSFSHSFE) the chain is on the extracellular side. Residues 93–113 (YVVGVSAVVAAHSLLQLLISV) form a helical membrane-spanning segment. Topologically, residues 114 to 128 (SRLLRKSPVIQSRSH) are cytoplasmic. A helical membrane pass occupies residues 129–149 (AWLVFAGDQVFAYAMISAGAA). Residues 150-178 (ASGVTNLNRTGIRHTALPNFCKPLQSFCD) are Extracellular-facing. Residue asparagine 157 is glycosylated (N-linked (GlcNAc...) asparagine). Residues 179 to 199 (HVAVSIFFTFLSCFLLAASAV) traverse the membrane as a helical segment. The Cytoplasmic portion of the chain corresponds to 200–210 (QEVIWLSRSKY).

It belongs to the Casparian strip membrane proteins (CASP) family. As to quaternary structure, homodimer and heterodimers.

The protein localises to the cell membrane. In Populus trichocarpa (Western balsam poplar), this protein is CASP-like protein 3A2.